Reading from the N-terminus, the 327-residue chain is Putative hydroxymethylpyrimidine/phosphomethylpyrimidine kinase C18B5.05c (327 aa).

Gln54 contributes to the 4-amino-5-hydroxymethyl-2-methylpyrimidine binding site.

Belongs to the ThiD family.

Its subcellular location is the cytoplasm. The protein localises to the nucleus. It catalyses the reaction 4-amino-5-hydroxymethyl-2-methylpyrimidine + ATP = 4-amino-2-methyl-5-(phosphooxymethyl)pyrimidine + ADP + H(+). The catalysed reaction is 4-amino-2-methyl-5-(phosphooxymethyl)pyrimidine + ATP = 4-amino-2-methyl-5-(diphosphooxymethyl)pyrimidine + ADP. Its pathway is cofactor biosynthesis; thiamine diphosphate biosynthesis; 4-amino-2-methyl-5-diphosphomethylpyrimidine from 5-amino-1-(5-phospho-D-ribosyl)imidazole: step 2/3. It participates in cofactor biosynthesis; thiamine diphosphate biosynthesis; 4-amino-2-methyl-5-diphosphomethylpyrimidine from 5-amino-1-(5-phospho-D-ribosyl)imidazole: step 3/3. Functionally, catalyzes the phosphorylation of hydroxymethylpyrimidine phosphate (HMP-P) to HMP-PP, and of HMP to HMP-P. This chain is Putative hydroxymethylpyrimidine/phosphomethylpyrimidine kinase C18B5.05c, found in Schizosaccharomyces pombe (strain 972 / ATCC 24843) (Fission yeast).